A 259-amino-acid chain; its full sequence is DNA-directed RNA polymerase 30 kDa polypeptide (259 aa).

The TFIIS-type zinc finger occupies 155–195 (YNTPCPNCKSRNTTPMMIQTRAADEPPLVRHACRDCKQHFK). Residues Cys159, Cys162, Cys187, and Cys190 each contribute to the Zn(2+) site. Positions 220 to 259 (EILPDNNPSPPESPEPASPIDDGLIRVTFDRNDEPPEDDE) are disordered. The span at 226-236 (NPSPPESPEPA) shows a compositional bias: pro residues.

Belongs to the poxviridae DNA-directed RNA polymerase 30 kDa subunit family. In terms of assembly, the DNA-dependent RNA polymerase (vRNAP) consists of eight subunits encoded by early viral genes and termed according to their apparent molecular masses Rpo147, Rpo132, Rpo35, Rpo30, Rpo22, Rpo19, Rpo18, and Rpo7. The same holoenzyme, with the addition of the transcription-specificity factor RAP94, is used for early gene expression.

The protein resides in the virion. The protein localises to the host cytoplasm. The enzyme catalyses RNA(n) + a ribonucleoside 5'-triphosphate = RNA(n+1) + diphosphate. Functionally, part of the DNA-dependent RNA polymerase which catalyzes the transcription of viral DNA into RNA using the four ribonucleoside triphosphates as substrates. Responsible for the transcription of early, intermediate and late genes. DNA-dependent RNA polymerase associates with the early transcription factor (ETF), itself composed of OPG118 and OPG134, thereby allowing the early genes transcription. Late transcription, and probably also intermediate transcription, require newly synthesized RNA polymerase. In Variola virus (isolate Human/India/Ind3/1967) (VARV), this protein is DNA-directed RNA polymerase 30 kDa polypeptide (OPG066).